Consider the following 343-residue polypeptide: Major capsid protein VP1 (343 aa).

Belongs to the polyomaviruses coat protein VP1 family. As to quaternary structure, homomultimer; disulfide-linked. The virus capsid is composed of 72 icosahedral units, each one composed of five disulfide-linked copies of VP1. Interacts with minor capsid proteins VP2 and VP3.

It localises to the virion. The protein localises to the host nucleus. Its function is as follows. Forms an icosahedral capsid with a T=7 symmetry and a 46-48 nm diameter. The capsid is composed of 72 pentamers linked to each other by disulfide bonds and associated with VP2 or VP3 proteins. Interacts with sialic acids on the cell surface to provide virion attachment to target cell. Once attached, the virion is internalized by endocytosis and traffics to the endoplasmic reticulum. Inside the endoplasmic reticulum, the protein folding machinery isomerizes VP1 interpentamer disulfide bonds, thereby triggering initial uncoating. Next, the virion uses the endoplasmic reticulum-associated degradation machinery to probably translocate in the cytosol before reaching the nucleus. Nuclear entry of the viral DNA involves the selective exposure and importin recognition of VP2/Vp3 nuclear localization signal. In late phase of infection, neo-synthesized VP1 encapsulates replicated genomic DNA in the nucleus, and participates in rearranging nucleosomes around the viral DNA. In Psittacidae (parrots), this protein is Major capsid protein VP1.